Reading from the N-terminus, the 303-residue chain is MNILNKAIVIAGPTGVGKTKISIDLAKKLNAEIISSDSAQVYRGLNIGTAKIREEEKEGIKHHLIDIVEPVLKYSVGNFEKDVNKILNQNSEKNFLLVGGTGLYLNSVTNGLSILPEADKKTREYLTTLNNQALLELALKYDEEATKEIHPNNRVRLERVVEVFLLTGQKFSELSKKNIKNNNFKFLKIALERNRENLYDRINKRVDIMFAQGLVDEVKNLYKIYGDKLYSLNIIGYNEIIDYINAKISLDEAVYQIKLNSRHYAKRQFTWFKADKEYQWFNLDGISEQEIVKTIYTLFNIKA.

An ATP-binding site is contributed by 12 to 19 (GPTGVGKT). 14–19 (TGVGKT) contacts substrate. Positions 37-40 (DSAQ) are interaction with substrate tRNA.

The protein belongs to the IPP transferase family. Monomer. The cofactor is Mg(2+).

It carries out the reaction adenosine(37) in tRNA + dimethylallyl diphosphate = N(6)-dimethylallyladenosine(37) in tRNA + diphosphate. Catalyzes the transfer of a dimethylallyl group onto the adenine at position 37 in tRNAs that read codons beginning with uridine, leading to the formation of N6-(dimethylallyl)adenosine (i(6)A). The chain is tRNA dimethylallyltransferase from Fusobacterium nucleatum subsp. nucleatum (strain ATCC 25586 / DSM 15643 / BCRC 10681 / CIP 101130 / JCM 8532 / KCTC 2640 / LMG 13131 / VPI 4355).